The chain runs to 201 residues: Large ribosomal subunit protein bL25 (201 aa).

It belongs to the bacterial ribosomal protein bL25 family. CTC subfamily. Part of the 50S ribosomal subunit; part of the 5S rRNA/L5/L18/L25 subcomplex. Contacts the 5S rRNA. Binds to the 5S rRNA independently of L5 and L18.

This is one of the proteins that binds to the 5S RNA in the ribosome where it forms part of the central protuberance. The protein is Large ribosomal subunit protein bL25 of Burkholderia multivorans (strain ATCC 17616 / 249).